The sequence spans 404 residues: Tryptophan synthase beta chain (404 aa).

Residue Lys-94 is modified to N6-(pyridoxal phosphate)lysine.

This sequence belongs to the TrpB family. Tetramer of two alpha and two beta chains. The cofactor is pyridoxal 5'-phosphate.

It catalyses the reaction (1S,2R)-1-C-(indol-3-yl)glycerol 3-phosphate + L-serine = D-glyceraldehyde 3-phosphate + L-tryptophan + H2O. Its pathway is amino-acid biosynthesis; L-tryptophan biosynthesis; L-tryptophan from chorismate: step 5/5. Functionally, the beta subunit is responsible for the synthesis of L-tryptophan from indole and L-serine. The protein is Tryptophan synthase beta chain of Staphylococcus saprophyticus subsp. saprophyticus (strain ATCC 15305 / DSM 20229 / NCIMB 8711 / NCTC 7292 / S-41).